We begin with the raw amino-acid sequence, 894 residues long: Protein translocase subunit SecA (894 aa).

ATP contacts are provided by residues glutamine 87, glycine 105–threonine 109, and aspartate 512. Residues glutamate 836 to glycine 870 are disordered. Positions 875, 877, 886, and 887 each coordinate Zn(2+).

It belongs to the SecA family. Monomer and homodimer. Part of the essential Sec protein translocation apparatus which comprises SecA, SecYEG and auxiliary proteins SecDF-YajC and YidC. The cofactor is Zn(2+).

The protein localises to the cell inner membrane. It is found in the cytoplasm. It carries out the reaction ATP + H2O + cellular proteinSide 1 = ADP + phosphate + cellular proteinSide 2.. Its function is as follows. Part of the Sec protein translocase complex. Interacts with the SecYEG preprotein conducting channel. Has a central role in coupling the hydrolysis of ATP to the transfer of proteins into and across the cell membrane, serving both as a receptor for the preprotein-SecB complex and as an ATP-driven molecular motor driving the stepwise translocation of polypeptide chains across the membrane. This Glaesserella parasuis serovar 5 (strain SH0165) (Haemophilus parasuis) protein is Protein translocase subunit SecA.